A 601-amino-acid chain; its full sequence is MSSQRNYCLAGCLSSCILVILMSFSDAASFQYYQVPQQDQEYRMKTLQRLPSPDMLKALEYIENLRKQASRTESLPDYTSYQGAPFLSEQKDTQALSTDTAKSPTSDDESEWMRAMLEALMQAEKEAKVSPQEKNNLYMDKNIPPELIEDYDSNKWSEKRPKAGKFSSRLYDDYSRDNPLKRTNEIVEGQYTPQSLATLQSVFQELGKLKGQANNKRDRMEEDQKLYKDDEDDLYKANNIAYEDVAGGEDWNPIEEKVESQTQEELKESKEEVEKTDDMEDEIKRSGLLGLQDEEPEKDTKEQESENLSNLMNTYLNMWMNRMDKGKQNPDRRSLRFSGKELDPEAIYQLIDISRNLQIPPEDLIDMLRDEDGRKFGGRLESEKEVDVPLDLDEVTETMTDKTNVYKNKQGFVRQPTSPVLPNIPEGLTVEDMVNLMGADKLQNRFKQNNGLQRPYPMLSKIKGHKAIWPKESEKRQIEYESRPEKEEELADYVVKMLAKYPELLGNNQNKKMPIPYSAGDLQELEKQYENALRGYVNMRGYQDLETVSSSNRRLSTRENDDTQNKQYIDEDLLMKVLEYLNQEKAEKARDHSVKRSMENM.

An N-terminal signal peptide occupies residues 1–30 (MSSQRNYCLAGCLSSCILVILMSFSDAASF). A disordered region spans residues 89–109 (EQKDTQALSTDTAKSPTSDDE). The span at 93–104 (TQALSTDTAKSP) shows a compositional bias: polar residues. Residue tyrosine 151 is modified to Sulfotyrosine. The span at 258 to 273 (VESQTQEELKESKEEV) shows a compositional bias: basic and acidic residues. A disordered region spans residues 258-307 (VESQTQEELKESKEEVEKTDDMEDEIKRSGLLGLQDEEPEKDTKEQESEN).

It belongs to the chromogranin/secretogranin protein family.

Its subcellular location is the secreted. Neuroendocrine protein of the granin family that regulates the biogenesis of secretory granules. This chain is Secretogranin-2, found in Pelophylax ridibundus (Marsh frog).